Reading from the N-terminus, the 361-residue chain is MTPTLRRKLQALAERREELQHLLSDPDVVGNNDTFRTLSRELSQLEPVAVALEEEARAKADLATAEALRNDPEMRELAEEEIAAAQARLEQLDAQLASLLVPRDPRDDGNLFLEVRAGTGGDEAAIFAGDLFRMYARYAERQGWKVEIESDSPGEHGGYKEVVARVVGRGAYSRLKFESGTHRVQRVPATESQGRIHTSAATVAIIPEADDVEEITINPADLKVDTFRSSGAGGQHVNKTESAIRITHVPSGVVVECQTERSQHANRDKAMKRLKAQLLDTERSKAAAAEAQTRKLQVGSGDRSQRIRTYSFPQGRITDHRVEGLTLYDLPNIIEGDLDALIGRLLHEHQADELARLSDSP.

At Gln235 the chain carries N5-methylglutamine. The disordered stretch occupies residues 288–307; the sequence is AAEAQTRKLQVGSGDRSQRI.

This sequence belongs to the prokaryotic/mitochondrial release factor family. Methylated by PrmC. Methylation increases the termination efficiency of RF1.

The protein localises to the cytoplasm. Its function is as follows. Peptide chain release factor 1 directs the termination of translation in response to the peptide chain termination codons UAG and UAA. The chain is Peptide chain release factor 1 from Xanthomonas axonopodis pv. citri (strain 306).